The primary structure comprises 207 residues: ATP-dependent Clp protease proteolytic subunit (207 aa).

Catalysis depends on S111, which acts as the Nucleophile. The active site involves H136.

The protein belongs to the peptidase S14 family. In terms of assembly, fourteen ClpP subunits assemble into 2 heptameric rings which stack back to back to give a disk-like structure with a central cavity, resembling the structure of eukaryotic proteasomes.

The protein resides in the cytoplasm. It carries out the reaction Hydrolysis of proteins to small peptides in the presence of ATP and magnesium. alpha-casein is the usual test substrate. In the absence of ATP, only oligopeptides shorter than five residues are hydrolyzed (such as succinyl-Leu-Tyr-|-NHMec, and Leu-Tyr-Leu-|-Tyr-Trp, in which cleavage of the -Tyr-|-Leu- and -Tyr-|-Trp bonds also occurs).. Cleaves peptides in various proteins in a process that requires ATP hydrolysis. Has a chymotrypsin-like activity. Plays a major role in the degradation of misfolded proteins. This is ATP-dependent Clp protease proteolytic subunit from Aliivibrio fischeri (strain ATCC 700601 / ES114) (Vibrio fischeri).